A 282-amino-acid chain; its full sequence is MADQPVQVNKLKTKITKGDMFKTFVFENFQQASFNFERIHALAFCVDMIPTIKRVYSKKEDQVAALKRHLVFFNTTPAMCGPIVGVTMALEEGRAAGEPIDDGTINSFKVGLMGPLAGVGDPLMWGTLRPILAALGASLALQGSWLGPILFFVAFNAVRLSLKWYGLQLGFSRGLALVKDMSGNLLQKITEGATVLGLFIMGILVTKWTTINVPLVVSKTTVNGKTTVTTLQNILDQFCPGLLALGWTLLCMYLLRKKVSPILLIFALFGVGIVGYWLGILK.

A PTS EIID domain is found at 13-281; it reads TKITKGDMFK…GIVGYWLGIL (269 aa). 4 helical membrane passes run 135 to 155, 197 to 217, 234 to 254, and 261 to 281; these read LGASLALQGSWLGPILFFVAF, GLFIMGILVTKWTTINVPLVV, ILDQFCPGLLALGWTLLCMYL, and PILLIFALFGVGIVGYWLGIL.

The protein localises to the cell membrane. In terms of biological role, the phosphoenolpyruvate-dependent sugar phosphotransferase system (PTS), a major carbohydrate active transport system, catalyzes the phosphorylation of incoming sugar substrates concomitant with their translocation across the cell membrane. The enzyme II SorABCD PTS system is involved in L-sorbose transport. The polypeptide is PTS system sorbose-specific EIID component (Lacticaseibacillus casei (Lactobacillus casei)).